A 603-amino-acid chain; its full sequence is Adenine deaminase 1 (603 aa).

The protein belongs to the metallo-dependent hydrolases superfamily. Adenine deaminase family. Requires Mn(2+) as cofactor.

The enzyme catalyses adenine + H2O + H(+) = hypoxanthine + NH4(+). The chain is Adenine deaminase 1 from Carboxydothermus hydrogenoformans (strain ATCC BAA-161 / DSM 6008 / Z-2901).